The sequence spans 101 residues: Apolipoprotein C-II (101 aa).

Residues 1-22 (MGTRLLPALFLVLLVLGFEVQG) form the signal peptide. The O-glycosylated at one site stretch occupies residues 23–38 (TQQPQQDEMPSPTFLT). The interval 66 to 74 (AVDEKLRDL) is lipid binding. Positions 78–101 (STAAMSTYTGIFTDQVLSVLKGEE) are lipoprotein lipase cofactor.

Belongs to the apolipoprotein C2 family. In terms of processing, proapolipoprotein C-II is synthesized as a sialic acid containing glycoprotein which is subsequently desialylated prior to its proteolytic processing. Proapolipoprotein C-II, the major form found in plasma undergoes proteolytic cleavage of its N-terminal hexapeptide to generate apolipoprotein C-II, which occurs as the minor form in plasma. Liver and intestine.

The protein localises to the secreted. In terms of biological role, component of chylomicrons, very low-density lipoproteins (VLDL), low-density lipoproteins (LDL), and high-density lipoproteins (HDL) in plasma. Plays an important role in lipoprotein metabolism as an activator of lipoprotein lipase. Both proapolipoprotein C-II and apolipoprotein C-II can activate lipoprotein lipase. In normolipidemic individuals, it is mainly distributed in the HDL, whereas in hypertriglyceridemic individuals, predominantly found in the VLDL and LDL. The polypeptide is Apolipoprotein C-II (APOC2) (Homo sapiens (Human)).